We begin with the raw amino-acid sequence, 833 residues long: F1 capsule-anchoring protein (833 aa).

The first 25 residues, 1-25 (MRYSKLFLCAGLTLATLPCWGRAYT), serve as a signal peptide directing secretion. An intrachain disulfide couples C807 to C829.

Belongs to the fimbrial export usher family.

The protein resides in the cell outer membrane. Functionally, a probable role in capsular biogenesis. It is likely that the caf1A molecule binds F1 antigen subunits during the extracellular secretion process. The sequence is that of F1 capsule-anchoring protein (caf1A) from Yersinia pestis.